The primary structure comprises 187 residues: Flavin prenyltransferase UbiX (187 aa).

Residues 9–11 (GSS), Thr34, 88–91 (SISS), and Arg123 each bind FMN. Residues Tyr153 and Lys169 each contribute to the dimethylallyl phosphate site.

This sequence belongs to the UbiX/PAD1 family.

The enzyme catalyses dimethylallyl phosphate + FMNH2 = prenylated FMNH2 + phosphate. Functionally, flavin prenyltransferase that catalyzes the synthesis of the prenylated FMN cofactor (prenyl-FMN) for 4-hydroxy-3-polyprenylbenzoic acid decarboxylase UbiD. The prenyltransferase is metal-independent and links a dimethylallyl moiety from dimethylallyl monophosphate (DMAP) to the flavin N5 and C6 atoms of FMN. The chain is Flavin prenyltransferase UbiX from Campylobacter jejuni subsp. jejuni serotype O:2 (strain ATCC 700819 / NCTC 11168).